The primary structure comprises 60 residues: Large ribosomal subunit protein bL32 (60 aa).

A compositionally biased stretch (basic residues) spans 1–16 (MAVPRRKTSPSRRGMR). The segment at 1–60 (MAVPRRKTSPSRRGMRRSADAIKKPTYAEDKDSGELRRPHHLDLKTGMYKGRQVLIKKES) is disordered. Over residues 17–44 (RSADAIKKPTYAEDKDSGELRRPHHLDL) the composition is skewed to basic and acidic residues.

The protein belongs to the bacterial ribosomal protein bL32 family.

In Rhodopseudomonas palustris (strain BisA53), this protein is Large ribosomal subunit protein bL32.